The sequence spans 564 residues: uncharacterized protein (564 aa).

The first 21 residues, 1–21 (MRRIGAITALSLPVLLSLLYS), serve as a signal peptide directing secretion. Cys-22 carries N-palmitoyl cysteine lipidation. Cys-22 carries the S-diacylglycerol cysteine lipid modification.

The protein resides in the cell membrane. This is an uncharacterized protein from Aquifex aeolicus (strain VF5).